Consider the following 347-residue polypeptide: Quinolinate synthase (347 aa).

Residues histidine 47 and serine 68 each contribute to the iminosuccinate site. Residue cysteine 113 coordinates [4Fe-4S] cluster. Residues 139–141 (YAN) and serine 156 each bind iminosuccinate. Cysteine 200 lines the [4Fe-4S] cluster pocket. Iminosuccinate-binding positions include 226-228 (HPE) and threonine 243. Cysteine 297 contributes to the [4Fe-4S] cluster binding site.

It belongs to the quinolinate synthase family. Type 1 subfamily. The cofactor is [4Fe-4S] cluster.

The protein resides in the cytoplasm. It carries out the reaction iminosuccinate + dihydroxyacetone phosphate = quinolinate + phosphate + 2 H2O + H(+). It participates in cofactor biosynthesis; NAD(+) biosynthesis; quinolinate from iminoaspartate: step 1/1. Functionally, catalyzes the condensation of iminoaspartate with dihydroxyacetone phosphate to form quinolinate. The polypeptide is Quinolinate synthase (Escherichia coli O7:K1 (strain IAI39 / ExPEC)).